The primary structure comprises 73 residues: Acyl carrier protein (73 aa).

In terms of domain architecture, Carrier spans M1–K73. An O-(pantetheine 4'-phosphoryl)serine modification is found at S35.

This sequence belongs to the acyl carrier protein (ACP) family. 4'-phosphopantetheine is transferred from CoA to a specific serine of apo-ACP by AcpS. This modification is essential for activity because fatty acids are bound in thioester linkage to the sulfhydryl of the prosthetic group.

It is found in the cytoplasm. It functions in the pathway lipid metabolism; fatty acid biosynthesis. Functionally, carrier of the growing fatty acid chain in fatty acid biosynthesis. In Lactococcus lactis subsp. lactis (strain IL1403) (Streptococcus lactis), this protein is Acyl carrier protein.